A 433-amino-acid chain; its full sequence is Urokinase-type plasminogen activator (433 aa).

Residues 1 to 20 (MRALLAHLLLCVLVVSASKG) form the signal peptide. An EGF-like domain is found at 26 to 62 (VPSDCGCLNGGTCMSNKYFSSIHWCNCPKKFGGQHCE). 6 disulfides stabilise this stretch: C30–C38, C32–C50, C52–C61, C69–C150, C90–C132, and C121–C145. Positions 33–56 (LNGGTCMSNKYFSSIHWCNCPKKF) are binds urokinase plasminogen activator surface receptor. A Kringle domain is found at 69–150 (CYEGNGHFYR…RVQECMVHNC (82 aa)). A connecting peptide region spans residues 151–177 (ADGKKPSSPPEELQFQCGQRTLRPRFK). The residue at position 157 (S157) is a Phosphoserine. 6 disulfide bridges follow: C167-C298, C208-C224, C216-C287, C315-C384, C347-C363, and C374-C402. The Peptidase S1 domain occupies 178–426 (IVGGEFTTIE…FLPWIHSHTR (249 aa)). Residues H223 and D274 each act as charge relay system in the active site. An N-linked (GlcNAc...) asparagine glycan is attached at N324. Position 325 is a phosphoserine (S325). The active-site Charge relay system is the S378.

It belongs to the peptidase S1 family. In terms of assembly, found in high and low molecular mass forms. Each consists of two chains, A and B. The high molecular mass form contains a long chain A which is cleaved to yield a short chain A. Forms heterodimer with SERPINA5. Binds LRP1B; binding is followed by internalization and degradation. Interacts with MRC2. Interacts with PLAUR. In complex with SERPINE1, interacts with PLAUR/uPAR. Interacts with SORL1 and LRP1, either alone or in complex with SERPINE1; these interactions are abolished in the presence of LRPAP1/RAP. The ternary complex composed of PLAUR-PLAU-PAI1 also interacts with SORLA. Post-translationally, phosphorylation of Ser-157 and Ser-325 abolishes proadhesive ability but does not interfere with receptor binding. In terms of processing, produced as an inactive single-chain protein (pro-uPA or sc-uPA), is processed into the active disulfide-linked two-chain form of PLAU/uPA by a proteolytic event mediated, at least, by TMPRSS4.

The protein resides in the secreted. It catalyses the reaction Specific cleavage of Arg-|-Val bond in plasminogen to form plasmin.. With respect to regulation, inhibited by SERPINA5. Inhibited by SERPINE1. Its function is as follows. Specifically cleaves the zymogen plasminogen to form the active enzyme plasmin. The chain is Urokinase-type plasminogen activator (PLAU) from Papio cynocephalus (Yellow baboon).